A 132-amino-acid polypeptide reads, in one-letter code: Small ribosomal subunit protein uS11 (132 aa).

Belongs to the universal ribosomal protein uS11 family. Part of the 30S ribosomal subunit. Interacts with proteins S7 and S18. Binds to IF-3.

Its function is as follows. Located on the platform of the 30S subunit, it bridges several disparate RNA helices of the 16S rRNA. Forms part of the Shine-Dalgarno cleft in the 70S ribosome. The polypeptide is Small ribosomal subunit protein uS11 (Chlamydia caviae (strain ATCC VR-813 / DSM 19441 / 03DC25 / GPIC) (Chlamydophila caviae)).